The primary structure comprises 591 residues: Negative elongation factor D (591 aa).

The interval 1–44 is disordered; sequence MAGPAPGTIMGEDYFGNASEWGEEADGGQHQEDDSGEGEDDAEV. Positions 34–44 are enriched in acidic residues; sequence DSGEGEDDAEV.

This sequence belongs to the NELF-D family. In terms of assembly, the NELF complex is composed of NELFA, NELFB, NELFCD and NELFE; NELFA and NELFCD form a stable subcomplex that binds primarily through NELFCD to the N-terminus of NELFB. Binds RNA which may help to stabilize the NELF complex on nucleic acid. In vitro, the NELFA:NELFCD subcomplex binds to ssDNA and ssRNA in a sequence- and structure-dependent manner. Interacts with ARAF1. Interacts with PCF11. Interacts with NELFB. Interacts with KAT8.

It localises to the nucleus. Functionally, essential component of the NELF complex, a complex that negatively regulates the elongation of transcription by RNA polymerase II. The NELF complex, which acts via an association with the DSIF complex and causes transcriptional pausing, is counteracted by the P-TEFb kinase complex. This chain is Negative elongation factor D (Nelfcd), found in Mus musculus (Mouse).